The sequence spans 113 residues: Colicin-E1 immunity protein (113 aa).

Functionally, this protein is able to protect a cell, which harbors the plasmid ColE1 encoding colicin E1, against colicin E1. The chain is Colicin-E1 immunity protein (imm) from Escherichia coli.